The following is a 469-amino-acid chain: Glutamate--tRNA ligase 1 (469 aa).

The short motif at 9–19 (PSPTGYLHVGG) is the 'HIGH' region element. Zn(2+)-binding residues include Cys98, Cys100, Cys125, and Glu127. Residues 236 to 240 (RLSKR) carry the 'KMSKS' region motif. ATP is bound at residue Lys239.

This sequence belongs to the class-I aminoacyl-tRNA synthetase family. Glutamate--tRNA ligase type 1 subfamily. Monomer. Requires Zn(2+) as cofactor.

It localises to the cytoplasm. The enzyme catalyses tRNA(Glu) + L-glutamate + ATP = L-glutamyl-tRNA(Glu) + AMP + diphosphate. In terms of biological role, catalyzes the attachment of glutamate to tRNA(Glu) in a two-step reaction: glutamate is first activated by ATP to form Glu-AMP and then transferred to the acceptor end of tRNA(Glu). The chain is Glutamate--tRNA ligase 1 from Nitrosococcus oceani (strain ATCC 19707 / BCRC 17464 / JCM 30415 / NCIMB 11848 / C-107).